Here is a 143-residue protein sequence, read N- to C-terminus: Large ribosomal subunit protein uL13 (143 aa).

Belongs to the universal ribosomal protein uL13 family. Part of the 50S ribosomal subunit.

Functionally, this protein is one of the early assembly proteins of the 50S ribosomal subunit, although it is not seen to bind rRNA by itself. It is important during the early stages of 50S assembly. The chain is Large ribosomal subunit protein uL13 from Dehalococcoides mccartyi (strain ATCC BAA-2266 / KCTC 15142 / 195) (Dehalococcoides ethenogenes (strain 195)).